The primary structure comprises 160 residues: Large ribosomal subunit protein bL17 (160 aa).

The disordered stretch occupies residues K128–E160. The segment covering K129–K140 has biased composition (basic residues).

Belongs to the bacterial ribosomal protein bL17 family. Part of the 50S ribosomal subunit. Contacts protein L32.

This chain is Large ribosomal subunit protein bL17, found in Porphyromonas gingivalis (strain ATCC 33277 / DSM 20709 / CIP 103683 / JCM 12257 / NCTC 11834 / 2561).